A 127-amino-acid polypeptide reads, in one-letter code: Small ribosomal subunit protein uS11 (127 aa).

It belongs to the universal ribosomal protein uS11 family. Part of the 30S ribosomal subunit. Interacts with proteins S7 and S18. Binds to IF-3.

In terms of biological role, located on the platform of the 30S subunit, it bridges several disparate RNA helices of the 16S rRNA. Forms part of the Shine-Dalgarno cleft in the 70S ribosome. The chain is Small ribosomal subunit protein uS11 from Pelodictyon phaeoclathratiforme (strain DSM 5477 / BU-1).